A 770-amino-acid chain; its full sequence is MIRLILWNNVQSLVFKRCLFVPSNSLTNKRKRRIPPSKPRSSNRKDGDIEPYRMTDQNQTPNTGSIARLPAEVKKELKDLRSFTKVIAQHLKPEQENDSLTSAEKPDTSQLPPIDIEEATDDIFGEISGTKKLSANAVPPPPPPPPPGLDIPDEIKERLGLLSELLVPAKTSNNKLPEKQVENNWKLLLSQLDQAGGLSGLSKRSVSKFFSKIPPKNLKNLIPMIENMYNKAEMSIPHPIYYMFVRSLTLGDKISDSQMQLINKYFQEISKQTDLKIDHYETMILAYVKNNHMEKIDGILAQMKKKNIEISKMIYTSIVRGYIFYQKDHQRALDTFDSMKFLSQKTQPDEKVYTDVIVSCVMHREIERALDLYYELKDKGMNVNQNLLSTLAKGCSRSKQFKTQAWNFLFQVYDHGWVPNLQTYEHMLYIAARDGDVELTRVLFYKMLQTNSVTIRAFRYLILSYSKYVPPHKRKEKHLILLNHKGQLFRQNILQDVDFSKPVHGFPFLPSSHIPDSKFVLAESSAIWAHTVMNNPSFLRQQTLVASYVSIALELGDFTEFKDRFDSASYLNTDGIPKVREIEIIEPRQDEPTEKATTTEEQITSSEPDTNSLIRSPILNQLQQNINDNQFKAPRDSYLYNLAIKAAGKFKDYSFAQQILHERGQFRKSNSFKLLSPKQQNQDDFQFAGYLVECWTNMNLLEDAYAVVLSSVDRFPWSWRELGVLNNAAMKLGSLELAEAVRKVAQVTQVKHHGKIKRQDFKTYVMKRGY.

Residues Met-1–His-90 constitute a mitochondrion transit peptide. Disordered regions lie at residues Asn-28–Ala-67 and His-90–Ile-114. A compositionally biased stretch (basic and acidic residues) spans Asn-43–Arg-53. The span at Thr-55–Ser-65 shows a compositional bias: polar residues. PPR repeat units lie at residues Lys-276 to Ile-310, Ser-311 to Thr-346, Asp-349 to Val-383, Asn-384 to Pro-419, and Asn-420 to Thr-454. Residues Arg-588–Thr-598 are compositionally biased toward basic and acidic residues. The segment at Arg-588 to Thr-610 is disordered. A compositionally biased stretch (polar residues) spans Thr-599–Thr-610. One copy of the PPR 6 repeat lies at Asp-636–Phe-666.

This sequence belongs to the CCM1 family. In terms of assembly, binds to mitochondrial small subunit 15S rRNA.

The protein localises to the mitochondrion. Its function is as follows. Regulates mitochondrial small subunit maturation by controlling 15S rRNA 5'-end processing. Localizes to the 5' precursor of the 15S rRNA in a position that is subsequently occupied by mS47 in the mature yeast mtSSU. Uses structure and sequence-specific RNA recognition, binding to a single-stranded region of the precursor and specifically recognizing bases -6 to -1. The exchange of Ccm1 for mS47 is coupled to the irreversible removal of precursor rRNA that is accompanied by conformational changes of the mitoribosomal proteins uS5m and mS26. These conformational changes signal completion of 5'-end rRNA processing through protection of the mature 5'-end of the 15S rRNA and stabilization of mS47. The removal of the 5' precursor together with the dissociation of Ccm1 may be catalyzed by the 5'-3' exoribonuclease Pet127. Involved in the specific removal of group I introns in mitochondrial encoded transcripts. The chain is Mitochondrial 15S rRNA processing factor CCM1 (CCM1) from Candida albicans (strain WO-1) (Yeast).